Consider the following 640-residue polypeptide: CREB3 regulatory factor (640 aa).

A disordered region spans residues 308 to 414 (SPGLVATAES…FSEPGYENDS (107 aa)). A compositionally biased stretch (low complexity) spans 317–329 (SGSLSASTSVSDS). Residues 356–371 (EDDEDDEDEFDDEDHD) are compositionally biased toward acidic residues. Over residues 372–381 (EGFGSEHELS) the composition is skewed to basic and acidic residues. Residues 382-402 (ENEEEEEEEEDYEDDRDDDIS) are compositionally biased toward acidic residues. In terms of domain architecture, bZIP spans 522–585 (TARPRSRKEK…VNRVQNPREE (64 aa)). A basic motif region spans residues 524-533 (RPRSRKEKNK). The leucine-zipper stretch occupies residues 534–541 (LASRACRL).

This sequence belongs to the bZIP family. CREBRF subfamily. As to quaternary structure, interacts (via leucine-zipper domain) with CREB3 (via leucine-zipper domain); the interaction promotes CREB3 degradation. Probably degraded by the proteasome. Highly expressed in intestin, testis, heart and kidney, weakly in brain adipose, colon, liver, lung and skeletal.

The protein resides in the nucleus. In terms of biological role, acts as a negative regulator of the endoplasmic reticulum stress response or unfolded protein response (UPR). Represses the transcriptional activity of CREB3 during the UPR. Recruits CREB3 into nuclear foci. The sequence is that of CREB3 regulatory factor (Crebrf) from Mus musculus (Mouse).